The following is a 1002-amino-acid chain: Golgin subfamily A member 2 (1002 aa).

The segment covering 1-11 has biased composition (pro residues); the sequence is MWPQPRLPPRP. The segment at 1–84 is interaction with p115/USO1; the sequence is MWPQPRLPPR…AATLQPSDDT (84 aa). Residues 1 to 107 are disordered; it reads MWPQPRLPPR…TSMAASQNHD (107 aa). Positions 16–892 form a coiled coil; the sequence is ETRQSKLAAA…LELQELVLRL (877 aa). A dimethylated arginine mark is found at Arg-18, Arg-30, and Arg-35. Positions 26-49 match the Nuclear localization signal motif; that stretch reads KKKLREYQQRNSPGVPTGAKKKKK. Ser-37 is subject to Phosphoserine. The span at 52–63 shows a compositional bias: polar residues; the sequence is NGSNPETTTSGG. Position 66 is a phosphoserine (Ser-66). The span at 95–105 shows a compositional bias: polar residues; the sequence is ASLTSMAASQN. A phosphoserine mark is found at Ser-273, Ser-438, and Ser-690. The interval 694 to 724 is disordered; that stretch reads HPGEGDGLDREEEEDEEEEEEEAVAVPQPMP. Residues 702-716 are compositionally biased toward acidic residues; that stretch reads DREEEEDEEEEEEEA. Residues Ser-937, Ser-953, and Ser-981 each carry the phosphoserine modification. The tract at residues 992–1002 is interaction with GORASP1/GRASP65; it reads DENDEVKITVI.

Belongs to the GOLGA2 family. As to quaternary structure, homodimer, may assemble into homohexamers. Homotetramer; forms a parallel homotetramer with a flexible rod-like structure that can give rise to I- and Y-shaped conformations. Interacts with GORASP1/GRASP65. The homooligomer forms a complex with GORASP1 with a 1:1 stoichiometry. Interacts with RAB1B that has been activated by GTP-binding. Interacts with p115/USO1; interaction with p115/USO1 inhibits interaction with STX5 and/or RAB1B. Interacts with STX5. Interacts with ZFPL1. Interacts with AKAP450/AKAP9; leading to recruit AKAP450/AKAP9 to the cis-Golgi. In terms of processing, cleaved by caspases at the onset of apoptosis. Post-translationally, methylation by PRMT5 is required for Golgi ribbon formation. While dimethylation at Arg-30 and Arg-35 are confirmed in vivo, it is unclear whether Arg-18 is methylated in vivo. Phosphorylated at Ser-37 by CDK1 at the onset of mitosis, inhibiting the interaction with p115/USO1 and triggering Golgi disassembly. Phosphorylated at Ser-37 in prophase as the Golgi complex starts to break down, and remains phosphorylated during further breakdown and partitioning of the Golgi fragments in metaphase and anaphase. In telophase, GM130 is dephosphorylated by PP2A as the Golgi fragments start to reassemble.

The protein localises to the golgi apparatus. The protein resides in the cis-Golgi network membrane. Its subcellular location is the endoplasmic reticulum-Golgi intermediate compartment membrane. It localises to the cytoplasm. It is found in the cytoskeleton. The protein localises to the spindle pole. Functionally, peripheral membrane component of the cis-Golgi stack that acts as a membrane skeleton that maintains the structure of the Golgi apparatus, and as a vesicle thether that facilitates vesicle fusion to the Golgi membrane. Required for normal protein transport from the endoplasmic reticulum to the Golgi apparatus and the cell membrane. Together with p115/USO1 and STX5, involved in vesicle tethering and fusion at the cis-Golgi membrane to maintain the stacked and inter-connected structure of the Golgi apparatus. Plays a central role in mitotic Golgi disassembly: phosphorylation at Ser-37 by CDK1 at the onset of mitosis inhibits the interaction with p115/USO1, preventing tethering of COPI vesicles and thereby inhibiting transport through the Golgi apparatus during mitosis. Also plays a key role in spindle pole assembly and centrosome organization. Promotes the mitotic spindle pole assembly by activating the spindle assembly factor TPX2 to nucleate microtubules around the Golgi and capture them to couple mitotic membranes to the spindle: upon phosphorylation at the onset of mitosis, GOLGA2 interacts with importin-alpha via the nuclear localization signal region, leading to recruit importin-alpha to the Golgi membranes and liberate the spindle assembly factor TPX2 from importin-alpha. TPX2 then activates AURKA kinase and stimulates local microtubule nucleation. Upon filament assembly, nascent microtubules are further captured by GOLGA2, thus linking Golgi membranes to the spindle. Regulates the meiotic spindle pole assembly, probably via the same mechanism. Also regulates the centrosome organization. Also required for the Golgi ribbon formation and glycosylation of membrane and secretory proteins. This chain is Golgin subfamily A member 2 (GOLGA2), found in Homo sapiens (Human).